Here is a 67-residue protein sequence, read N- to C-terminus: Protein LITTLE ZIPPER 3 (67 aa).

Residues Tyr-14 to Lys-59 are a coiled coil. Residues Gln-42–Ser-67 form a disordered region.

Interacts with REV. Interacts with ATBH-8, ATBH-9, ATB-14 and ATB-15. As to expression, expressed in the adaxial epidermis of the cotyledons and leaves, and in the vascular cylinder of wild-type torpedo stage embryos. Confined in the central zone and the organizing center in the shoot apical meristem.

It is found in the nucleus. Functionally, competitive inhibitor of the HD-ZIPIII transcription factors in shoot apical meristem (SAM) development. Acts by forming non-functional heterodimers. Part of a negative feedback loop. Involved in SAM development and lateral organ patterning. Essential for proper functioning of stem cells in the SAM. This Arabidopsis thaliana (Mouse-ear cress) protein is Protein LITTLE ZIPPER 3.